A 338-amino-acid chain; its full sequence is Probable tRNA pseudouridine synthase B (338 aa).

Catalysis depends on aspartate 80, which acts as the Nucleophile. Residues 247–322 (LPRIEIRDTA…IMVDTKRVLM (76 aa)) form the PUA domain.

It belongs to the pseudouridine synthase TruB family. Type 2 subfamily.

It catalyses the reaction uridine(55) in tRNA = pseudouridine(55) in tRNA. Functionally, could be responsible for synthesis of pseudouridine from uracil-55 in the psi GC loop of transfer RNAs. The protein is Probable tRNA pseudouridine synthase B of Methanopyrus kandleri (strain AV19 / DSM 6324 / JCM 9639 / NBRC 100938).